Here is a 342-residue protein sequence, read N- to C-terminus: Heat-inducible transcription repressor HrcA (342 aa).

The protein belongs to the HrcA family.

Negative regulator of class I heat shock genes (grpE-dnaK-dnaJ and groELS operons). Prevents heat-shock induction of these operons. The sequence is that of Heat-inducible transcription repressor HrcA from Geobacter sulfurreducens (strain ATCC 51573 / DSM 12127 / PCA).